Reading from the N-terminus, the 85-residue chain is Large ribosomal subunit protein bL27 (85 aa).

Residues 1–25 (MAHKKAGSSSKNGRDSNPQYLGVKR) are disordered. Residues 7 to 19 (GSSSKNGRDSNPQ) show a composition bias toward polar residues.

It belongs to the bacterial ribosomal protein bL27 family.

The chain is Large ribosomal subunit protein bL27 from Micrococcus luteus (strain ATCC 4698 / DSM 20030 / JCM 1464 / CCM 169 / CCUG 5858 / IAM 1056 / NBRC 3333 / NCIMB 9278 / NCTC 2665 / VKM Ac-2230) (Micrococcus lysodeikticus).